The following is a 378-amino-acid chain: Schlafen family member 2 (378 aa).

Belongs to the Schlafen family. In terms of tissue distribution, mainly expressed in the thymus, lymph node and spleen.

The protein resides in the cytoplasm. TRNA-binding protein involved in T-cell mediated immunity. Plays a key role during the metabolic reprograming phase of activated T-cell, when T-cells produce reactive oxygen species (ROS): acts by binding tRNAs and protecting them from cleavage by the oxidative stress-activated ribonuclease angiogenin (ANG). Also required for T-cell quiescence maintenance. The chain is Schlafen family member 2 from Mus musculus (Mouse).